The primary structure comprises 242 residues: Ribonuclease PH (242 aa).

Residues arginine 90 and glycine 128–arginine 130 contribute to the phosphate site.

Belongs to the RNase PH family. In terms of assembly, homohexameric ring arranged as a trimer of dimers.

The enzyme catalyses tRNA(n+1) + phosphate = tRNA(n) + a ribonucleoside 5'-diphosphate. Its function is as follows. Phosphorolytic 3'-5' exoribonuclease that plays an important role in tRNA 3'-end maturation. Removes nucleotide residues following the 3'-CCA terminus of tRNAs; can also add nucleotides to the ends of RNA molecules by using nucleoside diphosphates as substrates, but this may not be physiologically important. Probably plays a role in initiation of 16S rRNA degradation (leading to ribosome degradation) during starvation. The protein is Ribonuclease PH of Nocardioides sp. (strain ATCC BAA-499 / JS614).